The chain runs to 238 residues: GATA transcription factor 7 (238 aa).

Residues 24–64 (TSLESSSSQRKEDEQEREKFKSFSDQSTRLSPPEDLLSFPG) form a disordered region. A compositionally biased stretch (basic and acidic residues) spans 32 to 45 (QRKEDEQEREKFKS). Residues 112–119 (KPRSKRRR) carry the Nuclear localization signal motif. A GATA-type zinc finger spans residues 160-214 (QQLRRCCSHCGVQKTPQWRMGPLGAKTLCNACGVRFKSGRLLPEYRPACSPTFTN).

This sequence belongs to the type IV zinc-finger family. Class A subfamily.

The protein localises to the nucleus. Its function is as follows. Transcriptional activator that specifically binds 5'-GATA-3' or 5'-GAT-3' motifs within gene promoters. May be involved in the regulation of some light-responsive genes. The chain is GATA transcription factor 7 (GATA7) from Arabidopsis thaliana (Mouse-ear cress).